The following is an 863-amino-acid chain: Desmocollin-2 (863 aa).

The propeptide occupies 1 to 89 (KFIGRVNLKE…QEKVLRRAKR (89 aa)). 5 Cadherin domains span residues 90-197 (RWAP…APIF), 198-309 (TETS…LPTF), 310-423 (TRSS…GPEC), 424-528 (DPRV…VIPQ), and 529-644 (RTVV…ILGK). Topologically, residues 90–644 (RWAPIPCSVP…TGNREVILGK (555 aa)) are extracellular. An N-linked (GlcNAc...) asparagine glycan is attached at N120. N346, N495, and N579 each carry an N-linked (GlcNAc...) asparagine glycan. Residues 645–665 (WAILAILLGIALLFCILFTLV) traverse the membrane as a helical segment. Topologically, residues 666-863 (CGATTGADKK…RTLAETCMKR (198 aa)) are cytoplasmic. Phosphoserine is present on residues S826, S830, and S835.

As to quaternary structure, interacts with DSP, PKP2 and JUP. Interacts with DSG3; the interaction may limit the interaction of DSC3 with p38MAPK family members and therefore repress p38MAPK signaling activation. In terms of tissue distribution, expressed in esophagus and rumen. Weakly expressed in epithelia and cardiac muscle.

Its subcellular location is the cell membrane. The protein localises to the cell junction. It is found in the desmosome. Its function is as follows. A component of desmosome cell-cell junctions which are required for positive regulation of cellular adhesion. Promotes timely incorporation of DSG2 into desmosome intercellular junctions and promotes interaction of desmosome cell junctions with intermediate filament cytokeratin, via modulation of DSP phosphorylation. Plays an important role in desmosome-mediated maintenance of intestinal epithelial cell intercellular adhesion strength and barrier function. Positively regulates wound healing of intestinal mucosa via promotion of epithelial cell migration, and also plays a role in mechanotransduction of force between intestinal epithelial cells and extracellular matrix. May contribute to epidermal cell positioning (stratification) by mediating differential adhesiveness between cells that express different isoforms. In Bos taurus (Bovine), this protein is Desmocollin-2 (DSC2).